The primary structure comprises 660 residues: tRNA 5-methylaminomethyl-2-thiouridine biosynthesis bifunctional protein MnmC (660 aa).

Positions Met-1–Ala-242 are tRNA (mnm(5)s(2)U34)-methyltransferase. An FAD-dependent cmnm(5)s(2)U34 oxidoreductase region spans residues Ile-266–Ala-660.

It in the N-terminal section; belongs to the methyltransferase superfamily. tRNA (mnm(5)s(2)U34)-methyltransferase family. This sequence in the C-terminal section; belongs to the DAO family. FAD serves as cofactor.

The protein localises to the cytoplasm. The enzyme catalyses 5-aminomethyl-2-thiouridine(34) in tRNA + S-adenosyl-L-methionine = 5-methylaminomethyl-2-thiouridine(34) in tRNA + S-adenosyl-L-homocysteine + H(+). Its function is as follows. Catalyzes the last two steps in the biosynthesis of 5-methylaminomethyl-2-thiouridine (mnm(5)s(2)U) at the wobble position (U34) in tRNA. Catalyzes the FAD-dependent demodification of cmnm(5)s(2)U34 to nm(5)s(2)U34, followed by the transfer of a methyl group from S-adenosyl-L-methionine to nm(5)s(2)U34, to form mnm(5)s(2)U34. The polypeptide is tRNA 5-methylaminomethyl-2-thiouridine biosynthesis bifunctional protein MnmC (Burkholderia pseudomallei (strain 1710b)).